The chain runs to 494 residues: MDASTLFKKVKVKRVLGSLEQQIDDITTDSRTAREGSIFVASVGYTVDSHKFCQNVADQGCKLVVVNKEQSLPANVTQVVVPDTLRVASILAHTLYDYPSHQLVTFGVTGTNGKTSIATMIHLIQRKLQKNSAYLGTNGFQINETKTKGANTTPETVSLTKKIKEAVDAGAESMTLEVSSHGLVLGRLRGVEFDVAIFSNLTQDHLDFHGTMEAYGHAKSLLFSQLGEDLSKEKYVVLNNDDSFSEYLRTVTPYEVFSYGIDEEAQFMAKNIQESLQGVSFDFVTPFGTYPVKSPYVGKFNISNIMAAMIAVWSKGTSLETIIKAVENLEPVEGRLEVLDPSLPIDLIIDYAHTADGMNKLIDAVQPFVKQKLIFLVGMAGERDLTKTPEMGRVACRADYVIFTPDNPANDDPKMLTAELAKGATHQNYIEFDDRAEGIKHAIDIAEPGDTVVLASKGREPYQIMPGHIKVPHRDDLIGLEAAYKKFGGGPVDQ.

Ser-30 is a UDP-N-acetyl-alpha-D-muramoyl-L-alanyl-D-glutamate binding site. Gly-110–Ser-116 serves as a coordination point for ATP. UDP-N-acetyl-alpha-D-muramoyl-L-alanyl-D-glutamate-binding positions include Thr-152 to Thr-153, Ser-179, and Arg-187. N6-carboxylysine is present on Lys-219. The short motif at Asp-406–Ala-409 is the L-lysine recognition motif element.

Belongs to the MurCDEF family. MurE subfamily. Post-translationally, carboxylation is probably crucial for Mg(2+) binding and, consequently, for the gamma-phosphate positioning of ATP.

The protein resides in the cytoplasm. The enzyme catalyses UDP-N-acetyl-alpha-D-muramoyl-L-alanyl-D-glutamate + L-lysine + ATP = UDP-N-acetyl-alpha-D-muramoyl-L-alanyl-gamma-D-glutamyl-L-lysine + ADP + phosphate + H(+). Its pathway is cell wall biogenesis; peptidoglycan biosynthesis. Functionally, catalyzes the addition of L-lysine to the nucleotide precursor UDP-N-acetylmuramoyl-L-alanyl-D-glutamate (UMAG) in the biosynthesis of bacterial cell-wall peptidoglycan. The chain is UDP-N-acetylmuramoyl-L-alanyl-D-glutamate--L-lysine ligase from Staphylococcus aureus (strain Mu3 / ATCC 700698).